Here is a 1744-residue protein sequence, read N- to C-terminus: MVDGKEVYISFNRWEDTIRHSFVSHLSAEFQRKGVSVFASEDSASDDRFAEESDAAIAKARVSVVIFSENFASSKGCLNEFLKVSKCRRSKGLVVVPVFYGLTNSIVKKHCLELKKMYPDDKVDEWRNALWDIADLRGGHVSSHKRSDSELVEKIVADVRQKLDRRGRIGVYSRLTKIEYLLCKQPGCIIRSLGIWGMAGIGKTTLARAAYDQLSRDFEASCFIEDFDREFQEKGFFGLLEKQLGVNPQVTRLSILLKTLRSKRILLVLDDVRKPLGATSFLCEFDWLGPGSLIIVTSQDKQVLVQCQVNEIYKVQGLNKHESLQLFSRCAFGKDVPDQNLLELSMKFVDYANGNPLALSICGKNLKGKTPLDMKSVVLELKRHLSDKIFVKLKSSYDALSVSEKEIFLDIVFTFRGANVDNVMQSLAGCGFFPRVGIEALVDKSFVTVSENRVQVNNLIYDVGLKIINDQSDEIGMCYRFVDASNSQSLIEHKEIRESEQGYEDVKAINLDTSNLPFKGHIAFQHMYNLRYLTIYSSINPTKDPDLFLPGDPQFLPPELRLLHWTCYPLHSFPQNFGFQYLVELNMPCSKLKKLWGGTKNLEVLKRITLSCSVQLLNVDELQYSPNIEKIDLKGCLELQSFPDTGQLQHLRIVDLSTCKKIKSFPKVPPSIRKLHLQGTGIRDLSSLNHSSESQRLTRKLENVSSSNQDHRKQVLKLKDSSHLGSLPDIVIFESLEVLDFSGCSELEDIQGFPQNLKRLYLAKTAIKEVPSSLCHHISKLVKLDMENCERLRDLPMGMSNMKYLAVLKLSGCSNLENIKELPRNLKELYLAGTAVKEFPSTLLETLSEVVLLDLENCKKLQGLPTGMSKLEFLVMLKLSGCSKLEIIVDLPLNLIELYLAGTAIRELPPSIGDLALLDTLDLKNCNRLRHLPMEMHNLNPLKVLDLSNCSELEVFTSSLPKVRELRPAPTVMLLRSKLPFCFFIFYEHRVTLSLYKARLQYIPEEIRWMPSLKTLDLSRNGFTEVPVSIKDFSKLLSLRLRYCENLRSLPQLPRSLQLLNAHGCSSLQLITPDFKQLPRYYTFSNCFGLPSHMVSEVLANAPAIVECRKPQQGLENALACSFCLPSPTSRDSKLYLQPGSSTMIILNPKTRSTLVGFAILVEVSFSKDFHDTAGLGFRCVCRWNDKKGHAHKRDNIFHCWAPGEVVPKINDDHMFVFFDLKMHPSILFEGDVFGILADLVVFEIFPVNKQEMHVGDSCTITKCGVYVINDAAGSSSGNTMTPQCSSMDSLKLLDGKGKKRLRVNYAGLKQREKALFLYIACLLGGEKADLLAQFLASTDFVIESTLEDLAGRYLIDISSNGEVMMPPLQRNFSREIIHMLPASTKELVSMASGSPCNRNNDVFVSFHGKDFRKQFISDFLKKLVYKGIRICIGDKILSRSLINKVIKESSIAVVVFSENYASSSLCLLQLMEIMKCWEELGQVVMPIFYKVNPSDIRNQSGHFGKGFKKTCKKTINDERQRWSRALTDAASIAGECSLNWASDADMIEKVANDIRKKLISSKKLGKQIQRVDCDHDNPWETEFNKCIERFFQLPYDGNHDESLVSLTTEKVIDMKQTLKEIYQITKVKLKNNLVGRRHINNICFMHILYEKCEERSSFNPTSLHTLYDNGIPYQVYTKRKKHMSGEEKAPIGGCVGCFYMGQNQGITKAGGGRTMPTAYPAAPQANQGYNAGAQPYPPTAYAV.

The 161-residue stretch at 3-163 (DGKEVYISFN…KIVADVRQKL (161 aa)) folds into the TIR 1 domain. Glu-80 is a catalytic residue. One can recognise an NB-ARC domain in the interval 192-411 (SLGIWGMAGI…VSEKEIFLDI (220 aa)). 20 LRR repeats span residues 503–526 (YEDV…AFQH), 557–581 (PPEL…GFQY), 583–602 (VELN…TKNL), 603–626 (EVLK…QYSP), 648–669 (LQHL…PKVP), 670–692 (PSIR…NHSS), 710–733 (DHRK…IVIF), 734–754 (ESLE…QGFP), 755–777 (QNLK…LCHH), 779–802 (SKLV…MSNM), 804–823 (YLAV…KELP), 824–846 (RNLK…LLET), 848–871 (SEVV…MSKL), 892–915 (PLNL…IGDL), 917–939 (LLDT…MHNL), 941–963 (PLKV…LPKV), 987–1010 (YEHR…IRWM), 1011–1035 (PSLK…DFSK), 1037–1059 (LSLR…SLQL), and 1062–1086 (AHGC…TFSN). Positions 1399 to 1559 (RNNDVFVSFH…KVANDIRKKL (161 aa)) constitute a TIR 2 domain.

The protein belongs to the disease resistance TIR-NB-LRR family.

The enzyme catalyses NAD(+) + H2O = ADP-D-ribose + nicotinamide + H(+). Probable disease resistance protein. This chain is Probable disease resistance protein At4g19520, found in Arabidopsis thaliana (Mouse-ear cress).